The following is a 397-amino-acid chain: Multidrug resistance protein MdtH (397 aa).

10 helical membrane passes run 11-31, 71-91, 94-114, 137-157, 163-183, 211-231, 242-262, 291-311, 338-358, and 366-386; these read WFLA…MPMI, FGAR…FASL, AQSG…GCLF, LLMM…SWLL, YVCL…LLIL, LVLI…IFPI, AVGW…YPLA, FATT…GIVI, LGLA…HDYA, and LPWL…VNCF.

This sequence belongs to the major facilitator superfamily. DHA1 family. MdtH (TC 2.A.1.2.21) subfamily.

It localises to the cell inner membrane. This Aeromonas salmonicida (strain A449) protein is Multidrug resistance protein MdtH.